Consider the following 619-residue polypeptide: DNA mismatch repair protein MutL (619 aa).

Positions 339–400 (AEKDDPPAPR…GGASWPHAQP (62 aa)) are disordered.

This sequence belongs to the DNA mismatch repair MutL/HexB family.

In terms of biological role, this protein is involved in the repair of mismatches in DNA. It is required for dam-dependent methyl-directed DNA mismatch repair. May act as a 'molecular matchmaker', a protein that promotes the formation of a stable complex between two or more DNA-binding proteins in an ATP-dependent manner without itself being part of a final effector complex. This Klebsiella pneumoniae subsp. pneumoniae (strain ATCC 700721 / MGH 78578) protein is DNA mismatch repair protein MutL.